A 777-amino-acid polypeptide reads, in one-letter code: Zinc finger protein 786 (777 aa).

Positions 9–80 (LTFEDVAIYF…WGEKKKPDKE (72 aa)) constitute a KRAB domain. The segment at 194–216 (NSCPVCRENSWEKNHLVKQQKGH) adopts a C2H2-type 1; degenerate zinc-finger fold. Residues 240–262 (ISCLGCGKSFRLKQYLVRHLDIH) form a C2H2-type 2 zinc finger. Residues 268–291 (PQCPKCKMCFHHERTLFSHHLKNS) form a C2H2-type 3; degenerate zinc finger. Residues 420-442 (VFCRKCGQGFTKHCGLTEHTRIL) form a C2H2-type 4; degenerate zinc finger. C2H2-type zinc fingers lie at residues 448-470 (FWCA…QRLH), 476-498 (FQCT…QLQH), 504-526 (FSCS…LRVH), 532-554 (FQCP…QRIH), 560-582 (FSCG…FRVH), 588-610 (FQCP…QRLH), 616-638 (FQCP…QLLH), 644-665 (FSCQ…MRTH), 671-693 (FQCP…QGLH), 699-721 (FHCP…QRIH), and 727-749 (FACG…IRVH).

This sequence belongs to the krueppel C2H2-type zinc-finger protein family.

It localises to the nucleus. Its function is as follows. May be involved in transcriptional regulation. The protein is Zinc finger protein 786 (Znf786) of Mus musculus (Mouse).